Here is a 76-residue protein sequence, read N- to C-terminus: Conopeptide X11.1 (76 aa).

The first 20 residues, 1 to 20 (MMKLSVSFLLLLMLLPFITG), serve as a signal peptide directing secretion. Residues 21–39 (EENSDSDVLKSGAAVRQGR) constitute a propeptide that is removed on maturation. 4 disulfide bridges follow: cysteine 42–cysteine 56, cysteine 49–cysteine 61, cysteine 55–cysteine 66, and cysteine 60–cysteine 73.

In terms of tissue distribution, expressed by the venom duct.

It localises to the secreted. Its function is as follows. Antimicrobial peptide that potently inhibits growth of Mycobacterium tuberculosis (H37Rv strain) (MIC=3 uM). This Conasprella ximenes (Interrupted cone) protein is Conopeptide X11.1.